A 2193-amino-acid polypeptide reads, in one-letter code: Genome polyprotein (2193 aa).

The interval methionine 1–serine 23 is disordered. A lipid anchor (N-myristoyl glycine; by host) is attached at glycine 2. Residues glycine 2–glutamine 1503 lie on the Cytoplasmic side of the membrane. An amphipathic alpha-helix region spans residues glycine 566–leucine 588. Catalysis depends on for protease 2A activity residues histidine 883 and aspartate 901. Positions 918 and 920 each coordinate Zn(2+). The active-site For protease 2A activity is the cysteine 972. 2 residues coordinate Zn(2+): cysteine 978 and histidine 980. Positions serine 1112–leucine 1184 are membrane-binding. Residues serine 1112–threonine 1250 form an oligomerization region. Positions serine 1133 to serine 1137 are RNA-binding. The SF3 helicase domain occupies glutamate 1216–alanine 1374. Residue glycine 1240–serine 1247 participates in ATP binding. Zn(2+) is bound by residues cysteine 1381, cysteine 1392, and cysteine 1397. A C4-type; degenerate zinc finger spans residues cysteine 1381–cysteine 1397. The RNA-binding stretch occupies residues glutamate 1424–isoleucine 1431. The oligomerization stretch occupies residues isoleucine 1435–glutamine 1440. Residues serine 1504–tyrosine 1519 lie within the membrane without spanning it. The Cytoplasmic segment spans residues lysine 1520–phenylalanine 2193. An O-(5'-phospho-RNA)-tyrosine modification is found at tyrosine 1529. One can recognise a Peptidase C3 domain in the interval glycine 1549 to phenylalanine 1727. Residues histidine 1588, glutamate 1619, and cysteine 1695 each act as for protease 3C activity in the active site. The 117-residue stretch at glycine 1958–glutamate 2074 folds into the RdRp catalytic domain. Residues aspartate 1964 and aspartate 2060 each coordinate Mg(2+).

The protein belongs to the picornaviruses polyprotein family. In terms of assembly, interacts with capsid protein VP1 and capsid protein VP3 to form heterotrimeric protomers. As to quaternary structure, interacts with capsid protein VP0, and capsid protein VP3 to form heterotrimeric protomers. Five protomers subsequently associate to form pentamers which serve as building blocks for the capsid. Interacts with capsid protein VP2, capsid protein VP3 and capsid protein VP4 following cleavage of capsid protein VP0. Interacts with capsid protein VP1 and capsid protein VP3 in the mature capsid. In terms of assembly, interacts with capsid protein VP0 and capsid protein VP1 to form heterotrimeric protomers. Five protomers subsequently associate to form pentamers which serve as building blocks for the capsid. Interacts with capsid protein VP4 in the mature capsid. Interacts with protein 2C; this interaction may be important for virion morphogenesis. As to quaternary structure, interacts with capsid protein VP1 and capsid protein VP3. Homodimer. In terms of assembly, homohexamer; forms a hexameric ring structure with 6-fold symmetry characteristic of AAA+ ATPases. Interacts (via N-terminus) with host RTN3 (via reticulon domain); this interaction is important for viral replication. Interacts with capsid protein VP3; this interaction may be important for virion morphogenesis. As to quaternary structure, interacts with protein 3CD. Homodimer. Interacts with host GBF1. Interacts (via GOLD domain) with host ACBD3 (via GOLD domain); this interaction allows the formation of a viral protein 3A/ACBD3 heterotetramer with a 2:2 stoichiometry, which will stimulate the recruitment of host PI4KB in order to synthesize PI4P at the viral RNA replication sites. In terms of assembly, interacts with RNA-directed RNA polymerase. As to quaternary structure, interacts with host IFIH1/MDA5; this interaction inhibits host IFIH1. Protein 3CD: Interacts with protein 3AB and with RNA-directed RNA polymerase. In terms of assembly, interacts with Viral protein genome-linked and with protein 3CD. Mg(2+) is required as a cofactor. Post-translationally, specific enzymatic cleavages in vivo by the viral proteases yield processing intermediates and the mature proteins. Myristoylation is required for the formation of pentamers during virus assembly. Further assembly of 12 pentamers and a molecule of genomic RNA generates the provirion. In terms of processing, during virion maturation, immature virions are rendered infectious following cleavage of VP0 into VP4 and VP2. This maturation seems to be an autocatalytic event triggered by the presence of RNA in the capsid and it is followed by a conformational change infectious virion. Post-translationally, myristoylation is required during RNA encapsidation and formation of the mature virus particle. VPg is uridylylated by the polymerase into VPg-pUpU. This acts as a nucleotide-peptide primer for the genomic RNA replication.

The protein resides in the virion. Its subcellular location is the host cytoplasm. The protein localises to the host cytoplasmic vesicle membrane. It is found in the host nucleus. It carries out the reaction a ribonucleoside 5'-triphosphate + H2O = a ribonucleoside 5'-diphosphate + phosphate + H(+). The catalysed reaction is Selective cleavage of Tyr-|-Gly bond in the picornavirus polyprotein.. It catalyses the reaction RNA(n) + a ribonucleoside 5'-triphosphate = RNA(n+1) + diphosphate. The enzyme catalyses Selective cleavage of Gln-|-Gly bond in the poliovirus polyprotein. In other picornavirus reactions Glu may be substituted for Gln, and Ser or Thr for Gly.. With respect to regulation, replication or transcription is subject to high level of random mutations by the nucleotide analog ribavirin. Functionally, forms an icosahedral capsid of pseudo T=3 symmetry with capsid proteins VP2 and VP3. The capsid is 300 Angstroms in diameter, composed of 60 copies of each capsid protein and enclosing the viral positive strand RNA genome. Capsid protein VP1 mainly forms the vertices of the capsid. Capsid protein VP1 interacts with host cell receptor to provide virion attachment to target host cells. This attachment induces virion internalization. After binding to its receptor, the capsid undergoes conformational changes. Capsid protein VP1 N-terminus (that contains an amphipathic alpha-helix) and capsid protein VP4 are externalized. Together, they shape a pore in the host membrane through which viral genome is translocated to host cell cytoplasm. In terms of biological role, forms an icosahedral capsid of pseudo T=3 symmetry with capsid proteins VP2 and VP3. The capsid is 300 Angstroms in diameter, composed of 60 copies of each capsid protein and enclosing the viral positive strand RNA genome. Lies on the inner surface of the capsid shell. After binding to the host receptor, the capsid undergoes conformational changes. Capsid protein VP4 is released, Capsid protein VP1 N-terminus is externalized, and together, they shape a pore in the host membrane through which the viral genome is translocated into the host cell cytoplasm. Its function is as follows. Component of immature procapsids, which is cleaved into capsid proteins VP4 and VP2 after maturation. Allows the capsid to remain inactive before the maturation step. Functionally, cysteine protease that cleaves viral polyprotein and specific host proteins. It is responsible for the autocatalytic cleavage between the P1 and P2 regions, which is the first cleavage occurring in the polyprotein. Also cleaves the host translation initiation factor EIF4G1, in order to shut down the capped cellular mRNA translation. Inhibits the host nucleus-cytoplasm protein and RNA trafficking by cleaving host members of the nuclear pores. Counteracts stress granule formation probably by antagonizing its assembly or promoting its dissassembly. Cleaves and inhibits host IFIH1/MDA5, thereby inhibiting the type-I IFN production and the establishment of the antiviral state. Cleaves and inhibits host MAVS, thereby inhibiting the type-I IFN production and the establishment of the antiviral state. In terms of biological role, plays an essential role in the virus replication cycle by acting as a viroporin. Creates a pore in the host endoplasmic reticulum and as a consequence releases Ca2+ in the cytoplasm of infected cell. In turn, high levels of cytoplasmic calcium may trigger membrane trafficking and transport of viral ER-associated proteins to viroplasms, sites of viral genome replication. Induces and associates with structural rearrangements of intracellular membranes. Displays RNA-binding, nucleotide binding and NTPase activities. May play a role in virion morphogenesis and viral RNA encapsidation by interacting with the capsid protein VP3. Its function is as follows. Localizes the viral replication complex to the surface of membranous vesicles. Together with protein 3CD binds the Cis-Active RNA Element (CRE) which is involved in RNA synthesis initiation. Acts as a cofactor to stimulate the activity of 3D polymerase, maybe through a nucleid acid chaperone activity. Functionally, localizes the viral replication complex to the surface of membranous vesicles. It inhibits host cell endoplasmic reticulum-to-Golgi apparatus transport and causes the disassembly of the Golgi complex, possibly through GBF1 interaction. This would result in depletion of MHC, trail receptors and IFN receptors at the host cell surface. Plays an essential role in viral RNA replication by recruiting ACBD3 and PI4KB at the viral replication sites, thereby allowing the formation of the rearranged membranous structures where viral replication takes place. In terms of biological role, acts as a primer for viral RNA replication and remains covalently bound to viral genomic RNA. VPg is uridylylated prior to priming replication into VPg-pUpU. The oriI viral genomic sequence may act as a template for this. The VPg-pUpU is then used as primer on the genomic RNA poly(A) by the RNA-dependent RNA polymerase to replicate the viral genome. During genome replication, the VPg-RNA linkage is removed by the host TDP2, thereby accelerating replication. During the late stage of the replication cycle, host TDP2 is excluded from sites of viral RNA synthesis and encapsidation, allowing for the generation of progeny virions. Involved in the viral replication complex and viral polypeptide maturation. It exhibits protease activity with a specificity and catalytic efficiency that is different from protease 3C. Protein 3CD lacks polymerase activity. Protein 3CD binds to the 5'UTR of the viral genome. Its function is as follows. Major viral protease that mediates proteolytic processing of the polyprotein. Cleaves host EIF5B, contributing to host translation shutoff. Also cleaves host PABPC1, contributing to host translation shutoff. Binds and inhibits host IFIH1/MDA5, thereby inhibiting the type-I IFN production and the establishment of the antiviral state. Cleaves host MAP3K7/TAK1, resulting in inhibition of TRAF6-triggered NF-kappa-B induction. Cleaves host NLRP1, triggers host N-glycine-mediated degradation of the autoinhibitory NLRP1 N-terminal fragment. Functionally, replicates the viral genomic RNA on the surface of intracellular membranes. May form linear arrays of subunits that propagate along a strong head-to-tail interaction called interface-I. Covalently attaches UMP to a tyrosine of VPg, which is used to prime RNA synthesis. The positive stranded RNA genome is first replicated at virus induced membranous vesicles, creating a dsRNA genomic replication form. This dsRNA is then used as template to synthesize positive stranded RNA genomes. ss(+)RNA genomes are either translated, replicated or encapsidated. This Homo sapiens (Human) protein is Genome polyprotein.